A 538-amino-acid polypeptide reads, in one-letter code: Phosphoenolpyruvate carboxykinase (ATP) (538 aa).

Substrate is bound by residues Arg64, Tyr205, and Lys211. Residues Lys211, His230, and 246–254 (GLSGTGKTT) contribute to the ATP site. Positions 211 and 230 each coordinate Mn(2+). Asp267 is a Mn(2+) binding site. ATP contacts are provided by residues Glu295, Arg331, 447–448 (RI), and Thr453. Residue Arg331 coordinates substrate.

Belongs to the phosphoenolpyruvate carboxykinase (ATP) family. As to quaternary structure, monomer. Mn(2+) serves as cofactor.

It localises to the cytoplasm. The enzyme catalyses oxaloacetate + ATP = phosphoenolpyruvate + ADP + CO2. It participates in carbohydrate biosynthesis; gluconeogenesis. Its function is as follows. Involved in the gluconeogenesis. Catalyzes the conversion of oxaloacetate (OAA) to phosphoenolpyruvate (PEP) through direct phosphoryl transfer between the nucleoside triphosphate and OAA. This chain is Phosphoenolpyruvate carboxykinase (ATP), found in Baumannia cicadellinicola subsp. Homalodisca coagulata.